The primary structure comprises 495 residues: UDP-glycosyltransferase 73C9 (495 aa).

23–26 (GHMI) lines the UDP-alpha-D-glucose pocket. The Proton acceptor role is filled by His24. Asp129 functions as the Charge relay in the catalytic mechanism. UDP-alpha-D-glucose-binding positions include 355-358 (WSPQ), 373-381 (HCGWNSTLE), and 397-398 (DQ).

This sequence belongs to the UDP-glycosyltransferase family.

Its function is as follows. Possesses very weak glucosyltransferase activity toward 2,4,5-trichlorophenol (TCP), when assayed with high concentrations of TCP. This chain is UDP-glycosyltransferase 73C9, found in Barbarea vulgaris (Yellow rocket).